We begin with the raw amino-acid sequence, 151 residues long: Transcriptional regulator MraZ (151 aa).

2 SpoVT-AbrB domains span residues alanine 5–glutamate 51 and alanine 81–glutamine 124.

Belongs to the MraZ family. In terms of assembly, forms oligomers.

It localises to the cytoplasm. Its subcellular location is the nucleoid. The chain is Transcriptional regulator MraZ from Neisseria meningitidis serogroup C / serotype 2a (strain ATCC 700532 / DSM 15464 / FAM18).